The following is a 391-amino-acid chain: Na(+)/H(+) antiporter NhaA 1 (391 aa).

Transmembrane regions (helical) follow at residues 19-39, 56-76, 98-118, 128-148, 157-177, 180-200, 208-228, 264-284, 297-317, 335-355, and 364-384; these read FLAS…AALI, VWLG…IFFL, ALPG…YIAI, GWAI…SLLG, VFLA…IAFF, SGLN…LIAL, LLPY…SGVH, VAFA…LSGI, VALG…VLAI, GVAI…NLAF, and EVKV…ILLL.

It belongs to the NhaA Na(+)/H(+) (TC 2.A.33) antiporter family.

The protein localises to the cell inner membrane. The catalysed reaction is Na(+)(in) + 2 H(+)(out) = Na(+)(out) + 2 H(+)(in). Its function is as follows. Na(+)/H(+) antiporter that extrudes sodium in exchange for external protons. This Pseudomonas savastanoi pv. phaseolicola (strain 1448A / Race 6) (Pseudomonas syringae pv. phaseolicola (strain 1448A / Race 6)) protein is Na(+)/H(+) antiporter NhaA 1.